The chain runs to 1237 residues: Mediator of RNA polymerase II transcription subunit 5 (1237 aa).

Disordered stretches follow at residues 1109–1131 (DDEP…TSNA) and 1202–1226 (HGAQ…ADSG). The segment covering 1119 to 1131 (HAAANATSHTSNA) has biased composition (low complexity).

Belongs to the Mediator complex subunit 5 family. As to quaternary structure, component of the Mediator complex.

The protein resides in the nucleus. Its function is as follows. Component of the Mediator complex, a coactivator involved in the regulated transcription of nearly all RNA polymerase II-dependent genes. Mediator functions as a bridge to convey information from gene-specific regulatory proteins to the basal RNA polymerase II transcription machinery. Mediator is recruited to promoters by direct interactions with regulatory proteins and serves as a scaffold for the assembly of a functional preinitiation complex with RNA polymerase II and the general transcription factors. This is Mediator of RNA polymerase II transcription subunit 5 (NUT1) from Mycosarcoma maydis (Corn smut fungus).